A 687-amino-acid chain; its full sequence is Adhesion G-protein coupled receptor G1 (687 aa).

The first 25 residues, 1 to 25 (MAVQVLRQMVYFLLSLFSLVQGAHS), serve as a signal peptide directing secretion. Position 26-33 (26-33 (GSPREDFR)) interacts with heparin. At 26–402 (GSPREDFRFC…TEVEATHKHY (377 aa)) the chain is on the extracellular side. Disulfide bonds link C35–C91 and C121–C177. Residues N39, N148, and N171 are each glycosylated (N-linked (GlcNAc...) asparagine). A heparin-binding site is contributed by 190–200 (LQHPQKAAKRP). Residues 224–395 (DTLSFEEDRV…AVLMVSSTEV (172 aa)) form the GAIN-B domain. 4 N-linked (GlcNAc...) asparagine glycosylation sites follow: N234, N303, N324, and N341. Cystine bridges form between C346-C377 and C366-C379. Positions 346–395 (CVFWVEDPASSSTGSWSSAGCETVSRDTQTSCLCNHLTYFAVLMVSSTEV) are GPS. A stachel region spans residues 384–397 (YFAVLMVSSTEVEA). A helical membrane pass occupies residues 403-423 (LTLLSYVGCVISALACVFTIA). Topologically, residues 424–442 (AYLCSRRKSRDYTIKVHMN) are cytoplasmic. Residues 443-463 (LLSAVFLLDVSFLLSEPVALT) form a helical membrane-spanning segment. The Extracellular segment spans residues 464-471 (GSEAACRT). A helical transmembrane segment spans residues 472 to 492 (SAMFLHFSLLACLSWMGLEGY). Topologically, residues 493–512 (NLYRLVVEVFGTYVPGYLLK) are cytoplasmic. The helical transmembrane segment at 513-533 (LSIVGWGFPVFLVTLVALVDV) threads the bilayer. At 534 to 570 (NNYGPIILAVRRTPERVTYPSMCWIRDSLVSYVTNLG) the chain is on the extracellular side. The helical transmembrane segment at 571 to 591 (LFSLVFLFNLAMLATMVVQIL) threads the bilayer. Over 592–603 (RLRPHSQNWPHV) the chain is Cytoplasmic. A helical transmembrane segment spans residues 604–624 (LTLLGLSLVLGLPWALVFFSF). Residues 625 to 630 (ASGTFQ) are Extracellular-facing. The chain crosses the membrane as a helical span at residues 631–651 (LVILYLFSIITSFQGFLIFLW). The Cytoplasmic segment spans residues 652 to 687 (YWSMRFQAQGGPSPLKNNSDSAKLPISSGSTSSSRI). The interval 664-687 (SPLKNNSDSAKLPISSGSTSSSRI) is disordered. Residues 678–687 (SSGSTSSSRI) are compositionally biased toward low complexity.

This sequence belongs to the G-protein coupled receptor 2 family. LN-TM7 subfamily. As to quaternary structure, heterodimer of 2 chains generated by proteolytic processing; the large extracellular N-terminal fragment (ADGRG1 NT) and the membrane-bound C-terminal fragment (ADGRG1-CT) predominantly remain associated and non-covalently linked. ADGRG1 NT self-associates in a trans-trans manner; the homophilic interaction enhances receptor signaling. Interacts with TGM2. Interacts with heparin; leading to the reduction of ADGRG1 shedding. Interacts with COL3A1. Part of a GPCR-tetraspanin complex at least consisting of ADGRG1, CD81, eventually CD9, and GNA11 in which CD81 is enhancing the association of ADGRG1 with GNA11. Autoproteolytically cleaved into 2 fragments; the large extracellular N-terminal fragment and the membroune-bound C-terminal fragment predominantly remain associated and non-covalently linked. In terms of processing, N-glycosylated. The secreted ADGRG1 N-terminal fragment is heavily glycosylated. Post-translationally, ubiquitinated. Undergoes polyubiquitination upon activation. As to expression, expressed in neural progenitor cells in fetal forbrain. Expressed in migrating neurons. Expressed in radial glial endfeet (at protein level). Expressed in peritubular myoid cells, Sertoli cells, and germ cells of the testis.

Its subcellular location is the cell membrane. It localises to the secreted. It is found in the membrane raft. Forms a heterodimer of 2 chains generated by proteolytic processing that remain associated through non-covalent interactions mediated by the GAIN-B domain. In the inactivated receptor, the Stachel sequence (also named stalk) is embedded in the GAIN-B domain, where it adopts a beta-strand conformation. On activation, the Stachel moves into the 7 transmembrane region and adopts a twisted hook-shaped configuration that forms contacts within the receptor, leading to coupling of a G-alpha protein, which activates signaling. The cleaved GAIN-B and N-terminal domains can then dissociate from the rest of the receptor. Activated by the small-molecule agonist, 3-alpha-acetoxydihydrodeoxygedunin (3-alpha-DOG). Adhesion G-protein coupled receptor (aGPCR) for steroid hormone 17alpha-hydroxypregnenolone (17-OH), which is involved in cell adhesion and cell-cell interactions. Ligand binding causes a conformation change that triggers signaling via guanine nucleotide-binding proteins (G proteins) and modulates the activity of downstream effectors, such as RhoA pathway. ADGRG1 is coupled to G(12) and/or G(13) G proteins (GNA12 and GNA13, respectively) and mediates the activation Rho small GTPases. Acts as a potent suppressor of ferroptosis: binding to 17-OH-binding initiates signaling that down-regulates CD36 and alleviates ferroptosis-induced liver injury. Ligand-binding also induces cell adhesion activity via association with proteins such as collagen III/COL3A1 and TGM2. Mediates cell matrix adhesion in developing neurons and hematopoietic stem cells. Involved in cortical development, specifically in maintenance of the pial basement membrane integrity and in cortical lamination: association with COL3A1 in the developing brain inhibits neuronal migration via activation of the RhoA pathway. Together with TGM2, acts as a regulator of myelination and myelin repair in oligodendrocyte precursor cells. Acts as a hemostatic sensor of shear force: G protein-coupled receptor signaling is activated in response to shear force in platelets, promoting G(13) G protein signaling, and platelet shape change and aggregation in a COL3A1-dependent manner. Acts as an inhibitor of VEGFA production thereby inhibiting angiogenesis through a signaling pathway mediated by PRKCA. Plays a role in the maintenance of hematopoietic stem cells in bone marrow niche. Plays an essential role in testis development. Functionally, adhesion G-protein coupled receptor (aGPCR) for phosphatidylserine, which is involved in microglia-mediated synapse pruning during development. Required to maintain appropriate synaptic numbers in several brain regions in a time- and circuit-dependent fashion: phosphatidylserine-binding acts as a 'eat-me' signal for apoptotic cells, leading to microglial engulfment of phosphatidylserine-positive synapses. The polypeptide is Adhesion G-protein coupled receptor G1 (Mus musculus (Mouse)).